Consider the following 335-residue polypeptide: Pregnancy-specific beta-1-glycoprotein 5 (335 aa).

Residues 1 to 34 (MGPLSAPPCTQHITWKGLLLTASLLNFWNLPITA) form the signal peptide. The Ig-like V-type domain maps to 35–144 (QVTIEALPPK…TGYFTFNLYL (110 aa)). N-linked (GlcNAc...) asparagine glycosylation is found at Asn-104 and Asn-111. The Cell attachment site signature appears at 127–129 (RGD). Ig-like C2-type domains are found at residues 147–234 (PKPY…VTLN) and 239–317 (PDLP…KSMT). 2 cysteine pairs are disulfide-bonded: Cys-169–Cys-217 and Cys-261–Cys-301. Asn-175 and Asn-210 each carry an N-linked (GlcNAc...) asparagine glycan.

This sequence belongs to the immunoglobulin superfamily. CEA family. Synthesized by syncytiotrophoblast of the placenta.

The protein localises to the secreted. In Homo sapiens (Human), this protein is Pregnancy-specific beta-1-glycoprotein 5 (PSG5).